The primary structure comprises 158 residues: Tryptophan-rich sensory protein (158 aa).

5 helical membrane passes run 5–25 (WALF…GALL), 44–65 (WVFP…MRVA), 73–93 (ALAF…VFFG), 97–119 (MATA…WAFF), and 124–144 (WAGV…GLNF).

This sequence belongs to the TspO/BZRP family. Homodimer.

The protein resides in the membrane. It localises to the cell inner membrane. Functionally, may play a role in the transmembrane transport of tetrapyrroles and similar compounds, and thereby contribute to the regulation of tetrapyrrole biosynthesis. Binds tetrapyrroles and promotes the photooxidative degradation of protoporphyrin IX. Binds protoporphyrin IX, hemin, and coproporphyrin III, but does not bind delta-aminolevulinic acid. Can bind bilirubin, curcumin, gossypol, retinoic acid, cholesterol and the benzodiazepine receptor agonist PK-11195 (in vitro). Plays a role in the response to low oxygen levels and in the regulation of the biosynthesis of photosynthetic pigments. This is Tryptophan-rich sensory protein from Cereibacter sphaeroides (Rhodobacter sphaeroides).